The chain runs to 557 residues: Dihydroxy-acid dehydratase (557 aa).

D78 contacts Mg(2+). A [2Fe-2S] cluster-binding site is contributed by C119. D120 and K121 together coordinate Mg(2+). At K121 the chain carries N6-carboxylysine. C192 contacts [2Fe-2S] cluster. E446 contributes to the Mg(2+) binding site. The Proton acceptor role is filled by S472.

Belongs to the IlvD/Edd family. Homodimer. The cofactor is [2Fe-2S] cluster. It depends on Mg(2+) as a cofactor.

It carries out the reaction (2R)-2,3-dihydroxy-3-methylbutanoate = 3-methyl-2-oxobutanoate + H2O. The catalysed reaction is (2R,3R)-2,3-dihydroxy-3-methylpentanoate = (S)-3-methyl-2-oxopentanoate + H2O. It functions in the pathway amino-acid biosynthesis; L-isoleucine biosynthesis; L-isoleucine from 2-oxobutanoate: step 3/4. Its pathway is amino-acid biosynthesis; L-valine biosynthesis; L-valine from pyruvate: step 3/4. Its function is as follows. Functions in the biosynthesis of branched-chain amino acids. Catalyzes the dehydration of (2R,3R)-2,3-dihydroxy-3-methylpentanoate (2,3-dihydroxy-3-methylvalerate) into 2-oxo-3-methylpentanoate (2-oxo-3-methylvalerate) and of (2R)-2,3-dihydroxy-3-methylbutanoate (2,3-dihydroxyisovalerate) into 2-oxo-3-methylbutanoate (2-oxoisovalerate), the penultimate precursor to L-isoleucine and L-valine, respectively. This Campylobacter fetus subsp. fetus (strain 82-40) protein is Dihydroxy-acid dehydratase.